The sequence spans 466 residues: Sushi repeat-containing protein SRPX2 (466 aa).

Positions 1–24 (MKTGSLTQRGALLLLLLLAPAVTP) are cleaved as a signal peptide. Sushi domains lie at 70-120 (ATCY…YCRQ), 121-179 (MRCH…VCVD), and 263-322 (RRCP…VCTP). 4 disulfides stabilise this stretch: Cys72/Cys106, Cys92/Cys118, Cys123/Cys164, and Cys150/Cys177. The HYR domain maps to 178–262 (VDIDPPKIRC…SCKFIVKVQV (85 aa)). 2 disulfides stabilise this stretch: Cys265/Cys307 and Cys293/Cys320.

As to quaternary structure, forms homooligomers. Interacts with PLAUR (via the UPAR/Ly6 domains), ADAMTS4 and CTSB. Interacts with HGF; the interaction increases the mitogenic activity of HGF. Contains chondroitin sulfate chains.

Its subcellular location is the secreted. It localises to the cytoplasm. The protein resides in the cell surface. The protein localises to the synapse. Acts as a ligand for the urokinase plasminogen activator surface receptor. Plays a role in angiogenesis by inducing endothelial cell migration and the formation of vascular network (cords). Involved in cellular migration and adhesion. Increases the phosphorylation levels of FAK. Interacts with and increases the mitogenic activity of HGF. Promotes synapse formation. The chain is Sushi repeat-containing protein SRPX2 from Rattus norvegicus (Rat).